Here is a 113-residue protein sequence, read N- to C-terminus: Hydrogenase maturation factor HypA (113 aa).

His-2 provides a ligand contact to Ni(2+). Cys-73, Cys-76, Cys-89, and Cys-92 together coordinate Zn(2+).

This sequence belongs to the HypA/HybF family.

Its function is as follows. Involved in the maturation of [NiFe] hydrogenases. Required for nickel insertion into the metal center of the hydrogenase. The sequence is that of Hydrogenase maturation factor HypA from Chlorobaculum tepidum (strain ATCC 49652 / DSM 12025 / NBRC 103806 / TLS) (Chlorobium tepidum).